The primary structure comprises 236 residues: 2,3,4,5-tetrahydropyridine-2,6-dicarboxylate N-acetyltransferase (236 aa).

Belongs to the transferase hexapeptide repeat family. DapH subfamily.

The catalysed reaction is (S)-2,3,4,5-tetrahydrodipicolinate + acetyl-CoA + H2O = L-2-acetamido-6-oxoheptanedioate + CoA. It functions in the pathway amino-acid biosynthesis; L-lysine biosynthesis via DAP pathway; LL-2,6-diaminopimelate from (S)-tetrahydrodipicolinate (acetylase route): step 1/3. In terms of biological role, catalyzes the transfer of an acetyl group from acetyl-CoA to tetrahydrodipicolinate. This is 2,3,4,5-tetrahydropyridine-2,6-dicarboxylate N-acetyltransferase from Clostridium perfringens (strain SM101 / Type A).